Consider the following 115-residue polypeptide: Migration and invasion enhancer 1 (115 aa).

Residues M1–V10 are compositionally biased toward polar residues. Positions M1 to G22 are disordered. Position 2 is an N-acetylserine (S2). A disulfide bond links C30 and C33. The S-geranylgeranyl cysteine moiety is linked to residue C112. A propeptide spans V113–L115 (removed in mature form).

It belongs to the SelWTH family. In terms of assembly, interacts with GPX1. Isoprenylation facilitates association with the plasma membrane and enhances the migratory phenotype of cells by inducing increased filopodia formation.

Its subcellular location is the cytoplasm. It localises to the cytosol. The protein localises to the cell membrane. Increases cell migration by inducing filopodia formation at the leading edge of migrating cells. Plays a role in regulation of apoptosis, possibly through control of CASP3. May be involved in a redox-related process. This chain is Migration and invasion enhancer 1 (MIEN1), found in Bos taurus (Bovine).